The sequence spans 78 residues: Large ribosomal subunit protein bL28 (78 aa).

It belongs to the bacterial ribosomal protein bL28 family.

The protein is Large ribosomal subunit protein bL28 of Proteus mirabilis (strain HI4320).